The primary structure comprises 347 residues: UPF0283 membrane protein ECA1987 (347 aa).

The span at 1 to 11 (MNEPLKPRVTF) shows a compositional bias: basic and acidic residues. A disordered region spans residues 1 to 48 (MNEPLKPRVTFDDVSPQEPQPQLRAGLAFDEQSSTPFSPISREEEVPE). 3 helical membrane-spanning segments follow: residues 70–90 (MVMA…VQSL), 99–119 (WIAL…VGSL), and 213–233 (ESTL…FIAW).

The protein belongs to the UPF0283 family.

Its subcellular location is the cell inner membrane. The polypeptide is UPF0283 membrane protein ECA1987 (Pectobacterium atrosepticum (strain SCRI 1043 / ATCC BAA-672) (Erwinia carotovora subsp. atroseptica)).